The primary structure comprises 397 residues: S-adenosylmethionine synthase (397 aa).

Residue His-16 coordinates ATP. Asp-18 serves as a coordination point for Mg(2+). Glu-44 lines the K(+) pocket. Positions 57 and 100 each coordinate L-methionine. The tract at residues Gln-100–Asn-110 is flexible loop. ATP-binding positions include Asp-175–Lys-177, Arg-242–Phe-243, Asp-251, Arg-257–Lys-258, Ala-274, and Lys-278. Residue Asp-251 participates in L-methionine binding. Lys-282 provides a ligand contact to L-methionine.

Belongs to the AdoMet synthase family. Homotetramer; dimer of dimers. Mg(2+) is required as a cofactor. K(+) serves as cofactor.

It is found in the cytoplasm. It carries out the reaction L-methionine + ATP + H2O = S-adenosyl-L-methionine + phosphate + diphosphate. The protein operates within amino-acid biosynthesis; S-adenosyl-L-methionine biosynthesis; S-adenosyl-L-methionine from L-methionine: step 1/1. Functionally, catalyzes the formation of S-adenosylmethionine (AdoMet) from methionine and ATP. The overall synthetic reaction is composed of two sequential steps, AdoMet formation and the subsequent tripolyphosphate hydrolysis which occurs prior to release of AdoMet from the enzyme. The polypeptide is S-adenosylmethionine synthase (Leifsonia xyli subsp. xyli (strain CTCB07)).